The primary structure comprises 150 residues: MSHLDPTLLVLLVLAALGIISHNMTVTLAMLLLLVIRITPLNHFFPWVEKYGLTIGVLILTVGVMAPIASGKITVQAVLNSFMNWKSLLAIVIGVLVSWLGSRGVSLMSNQPSTVAGLLVGTVLGVALFKGVPVGPLIAAGILSLLIGKS.

Transmembrane regions (helical) follow at residues 8–28 (LLVL…TVTL), 51–71 (YGLT…IASG), 88–108 (LLAI…VSLM), and 123–143 (VLGV…AGIL).

It belongs to the UPF0756 family.

The protein resides in the cell membrane. The protein is UPF0756 membrane protein plu2726 of Photorhabdus laumondii subsp. laumondii (strain DSM 15139 / CIP 105565 / TT01) (Photorhabdus luminescens subsp. laumondii).